The primary structure comprises 93 residues: Small ribosomal subunit protein uS19 (93 aa).

Belongs to the universal ribosomal protein uS19 family.

Functionally, protein S19 forms a complex with S13 that binds strongly to the 16S ribosomal RNA. This is Small ribosomal subunit protein uS19 from Ruminiclostridium cellulolyticum (strain ATCC 35319 / DSM 5812 / JCM 6584 / H10) (Clostridium cellulolyticum).